We begin with the raw amino-acid sequence, 266 residues long: Metallo-beta-lactamase VIM-2 (266 aa).

The first 20 residues, 1–20 (MFKLLSKLLVYLTASIMAIA), serve as a signal peptide directing secretion. Residues histidine 114, histidine 116, and cysteine 198 each contribute to the Zn(2+) site.

The protein belongs to the metallo-beta-lactamase superfamily. Class-B beta-lactamase family. Monomer. Requires Zn(2+) as cofactor.

It is found in the periplasm. The enzyme catalyses a beta-lactam + H2O = a substituted beta-amino acid. Its activity is regulated as follows. Inhibited by chelating agents such as EDTA. Inhibited by a fungal natural product, aspergillomarasmine A (AMA). Inhibited by 2-triazolylthioacetamides. Functionally, class B beta-lactamase which confers resistance to the beta-lactam antibiotics, including penicillins, cephalosporins and carbapenems. Acts via hydrolysis of the beta-lactam ring. Has penicillin-, cephalosporin- and carbapenem-hydrolyzing activities. This Escherichia coli protein is Metallo-beta-lactamase VIM-2.